The following is a 594-amino-acid chain: UvrABC system protein C (594 aa).

In terms of domain architecture, GIY-YIG spans 14–91; the sequence is DQPGCYLMKD…IKKHDPKYNI (78 aa). The 36-residue stretch at 196–231 folds into the UVR domain; that stretch reads KEVRSELETKMYEASEKLEFERAKELRDQIAHIDAI.

It belongs to the UvrC family. In terms of assembly, interacts with UvrB in an incision complex.

The protein resides in the cytoplasm. The UvrABC repair system catalyzes the recognition and processing of DNA lesions. UvrC both incises the 5' and 3' sides of the lesion. The N-terminal half is responsible for the 3' incision and the C-terminal half is responsible for the 5' incision. The sequence is that of UvrABC system protein C from Bacillus thuringiensis (strain Al Hakam).